The primary structure comprises 341 residues: MVHQLSLVSMVSHSNYVQTISTLQALTGLLTPQPISTYTLVTKPHDVFKPKFEPGKVNQIEQFYMRCVTTWNDETGNKFDLASPVLENDTDILVNRLFLGVDDRRNWTMQISDIPIAGKNQACSAQTIYESTLVHHHTKVMDKEKVQSDVSNESNMDIDDKDEDKKENIKKEESGEEVKGSGEEVKGSGEEVKGSGEEAKKSGEEAKEHSEGNASQTVKELVVLNRRDSFLQFLEDLGYDVINQFWMKGVRFFHGDIVIEIFKVFVRDDEKDAEKDKIRLKLLDPSNTFQIRTYINVPKSTDVELINQGTKDLLKLQEFLKNLIKLEIPDRMFMDSRVTYK.

Residues 139–216 (KVMDKEKVQS…KEHSEGNASQ (78 aa)) form a disordered region. Over residues 163 to 211 (EDKKENIKKEESGEEVKGSGEEVKGSGEEVKGSGEEAKKSGEEAKEHSE) the composition is skewed to basic and acidic residues.

This sequence belongs to the Mediator complex subunit 18 family. Component of the Mediator complex.

The protein resides in the nucleus. Its function is as follows. Component of the Mediator complex, a coactivator involved in the regulated transcription of nearly all RNA polymerase II-dependent genes. Mediator functions as a bridge to convey information from gene-specific regulatory proteins to the basal RNA polymerase II transcription machinery. Mediator is recruited to promoters by direct interactions with regulatory proteins and serves as a scaffold for the assembly of a functional preinitiation complex with RNA polymerase II and the general transcription factors. This is Mediator of RNA polymerase II transcription subunit 18 (SRB5) from Debaryomyces hansenii (strain ATCC 36239 / CBS 767 / BCRC 21394 / JCM 1990 / NBRC 0083 / IGC 2968) (Yeast).